The primary structure comprises 421 residues: Histidine--tRNA ligase (421 aa).

This sequence belongs to the class-II aminoacyl-tRNA synthetase family. Homodimer.

It is found in the cytoplasm. It catalyses the reaction tRNA(His) + L-histidine + ATP = L-histidyl-tRNA(His) + AMP + diphosphate + H(+). The polypeptide is Histidine--tRNA ligase (Coxiella burnetii (strain CbuK_Q154) (Coxiella burnetii (strain Q154))).